The chain runs to 782 residues: Chondroitin proteoglycan 4 (782 aa).

Positions 1-18 are cleaved as a signal peptide; the sequence is MRLVYSLIFLLFIPFSHP. N-linked (GlcNAc...) asparagine glycans are attached at residues Asn76, Asn208, Asn462, Asn468, Asn474, and Asn503. Residues 513–726 are disordered; sequence ISEKSTEESS…EDQGSGNYKK (214 aa). 5 stretches are compositionally biased toward low complexity: residues 520 to 532, 548 to 566, 573 to 612, 662 to 672, and 688 to 722; these read ESSG…SGDG, SGSS…SSGE, SSGS…SSDT, FGESSGSSGES, and SGSS…QGSG. The N-linked (GlcNAc...) asparagine glycan is linked to Asn559. O-linked (Xyl...) (chondroitin sulfate) serine glycosylation occurs at Ser691. N-linked (GlcNAc...) asparagine glycosylation occurs at Asn699. O-linked (Xyl...) (chondroitin sulfate) serine glycans are attached at residues Ser701, Ser704, Ser708, Ser714, and Ser721. An N-linked (GlcNAc...) asparagine glycan is attached at Asn743.

The chain is Chondroitin proteoglycan 4 from Caenorhabditis elegans.